The following is a 162-amino-acid chain: NADH-quinone oxidoreductase subunit I (162 aa).

4Fe-4S ferredoxin-type domains are found at residues Leu52–Gly82 and Thr93–Asn122. [4Fe-4S] cluster-binding residues include Cys62, Cys65, Cys68, Cys72, Cys102, Cys105, Cys108, and Cys112.

The protein belongs to the complex I 23 kDa subunit family. In terms of assembly, NDH-1 is composed of 14 different subunits. Subunits NuoA, H, J, K, L, M, N constitute the membrane sector of the complex. Requires [4Fe-4S] cluster as cofactor.

It localises to the cell inner membrane. The catalysed reaction is a quinone + NADH + 5 H(+)(in) = a quinol + NAD(+) + 4 H(+)(out). NDH-1 shuttles electrons from NADH, via FMN and iron-sulfur (Fe-S) centers, to quinones in the respiratory chain. The immediate electron acceptor for the enzyme in this species is believed to be ubiquinone. Couples the redox reaction to proton translocation (for every two electrons transferred, four hydrogen ions are translocated across the cytoplasmic membrane), and thus conserves the redox energy in a proton gradient. This is NADH-quinone oxidoreductase subunit I from Xanthobacter autotrophicus (strain ATCC BAA-1158 / Py2).